We begin with the raw amino-acid sequence, 687 residues long: Chloride channel protein ClC-Kb (687 aa).

The Cytoplasmic portion of the chain corresponds to 1–50 (MEEIVGLREGSPRKPVPLQELWRPCPRIRRNIQGSLEWLKERLFRVGEDW). Transmembrane regions (helical) follow at residues 51–82 (YFLVALGVLMALISYAMNFAIGRVVRAHKWLY) and 91–111 (LRYLSWTVYPVALLSFSSGFS). An intramembrane region (helical) is located at residues 116–127 (PSSGGSGIPEVK). S121 contributes to the chloride binding site. 2 helical membrane-spanning segments follow: residues 141 to 160 (IKNFGAKVVGLSCTLATGST) and 161 to 180 (IFLGKLGPFVHLSVMIAAYL). N193 carries N-linked (GlcNAc...) asparagine glycosylation. An intramembrane region (helical) is located at residues 203–224 (AGAAVGVATVFAAPISGVLFSI). Residues 236–255 (YWRGFFAATCGAFMFHLLAV) traverse the membrane as a helical segment. The Ca(2+) site is built by E259, E261, D278, and E281. 2 consecutive transmembrane segments (helical) span residues 282 to 310 (IFFFVALGAICGILSCGYNYCQRTSLFFL) and 325 to 342 (PLYSALAAVVLASITYPP). The segment at residues 349–360 (ASRLSMSEYLET) is an intramembrane region (helical). A run of 2 helical transmembrane segments spans residues 400 to 420 (GTLVFFLVMKFWMLILATTIP) and 421 to 440 (IPAGYFLPIFVYGAAIGRLF). Residue F426 participates in chloride binding. Residues 464-496 (GAYALAGAAAFSGAVTHTLSTALLAFEVSGQIV) constitute an intramembrane region (helical). Residues 500–520 (PVLMAVLAANAICQSYQPSFY) traverse the membrane as a helical segment. At 521-687 (DGTIIVKKLP…STLTNPPAPK (167 aa)) the chain is on the cytoplasmic side. CBS domains follow at residues 551-609 (MNCT…DSAS) and 626-687 (CPTQ…PAPK).

It belongs to the chloride channel (TC 2.A.49) family. CLCNKB subfamily. In terms of assembly, homodimer. Interacts with BSND. In terms of processing, N-glycosylated. In terms of tissue distribution, expressed predominantly in the kidney. Expressed in all segments of the nephron examined, including the S2 segment and the glomerulus.

The protein localises to the basolateral cell membrane. The catalysed reaction is chloride(in) = chloride(out). It carries out the reaction iodide(out) = iodide(in). It catalyses the reaction nitrate(in) = nitrate(out). The enzyme catalyses bromide(in) = bromide(out). Anion-selective channel permeable to small monovalent anions with ion selectivity for chloride &gt; bromide &gt; nitrate &gt; iodide. Forms a homodimeric channel where each subunit has its own ion conduction pathway. May conduct double-barreled currents controlled by two types of gates, two fast gates that control each subunit independently and a slow common gate that opens and shuts off both subunits simultaneously. Assembles with the regulatory subunit BSND/Barttin for sorting at the basolateral plasma membrane domain and functional switch to the ion conducting state. CLCNKB:BSND channels display mostly a linear current-voltage relationship controlled by common gate. Mediates chloride conductance along nephron segments, namely the thick ascending limb of Henle's loop, convoluted tubule and the collecting duct, contributing to the maintenance of systemic acid-base and electrolyte homeostasis. Conducts chloride currents in the stria vascularis of the inner ear to establish the endocochlear potential necessary for normal hearing. The sequence is that of Chloride channel protein ClC-Kb from Rattus norvegicus (Rat).